The following is a 2133-amino-acid chain: Coagulation factor VIII (2133 aa).

Residues 1 to 19 form the signal peptide; sequence MQLELSTCVFLCLLPLGFS. Plastocyanin-like domains follow at residues 20–199, 207–357, 399–573, and 583–730; these read AIRR…LLVC, ERTQ…QLRR, KTWV…LLIC, and NQMM…VYSC. F5/8 type A domains follow at residues 20–357 and 399–730; these read AIRR…QLRR and KTWV…VYSC. C173 and C199 are oxidised to a cystine. Residues N233 and N259 are each glycosylated (N-linked (GlcNAc...) asparagine). A disulfide bond links C547 and C573. A glycan (N-linked (GlcNAc...) asparagine) is linked at N601. 3 positions are modified to sulfotyrosine: Y737, Y738, and Y742. 2 disordered regions span residues 760 to 790 and 804 to 914; these read SFAQ…LDPQ and PSGD…PHPQ. The interval 760 to 1599 is b; it reads SFAQNSRPPS…LISYPDDQEQ (840 aa). Over residues 761-780 the composition is skewed to polar residues; sequence FAQNSRPPSASQKQFQTITS. Basic and acidic residues-rich tracts occupy residues 853-862 and 868-878; these read LRPELHHSAE and EPEKELKKLDS. Positions 879-888 are enriched in low complexity; sequence KMSSSSDLLK. Positions 889-900 are enriched in polar residues; that stretch reads TSPTIPSDTLSA. N929, N985, and N1025 each carry an N-linked (GlcNAc...) asparagine glycan. Residues 1042–1078 are disordered; sequence LGKNPLSSERGPSPELLTSSGSGKSVKGQSSGQGRIR. The span at 1060–1075 shows a compositional bias: low complexity; that stretch reads SSGSGKSVKGQSSGQG. A glycan (N-linked (GlcNAc...) asparagine) is linked at N1111. The segment at 1160 to 1179 is disordered; the sequence is PSVEGFDGGSHAPVPQDSRS. N1181, N1208, N1245, N1265, and N1335 each carry an N-linked (GlcNAc...) asparagine glycan. The disordered stretch occupies residues 1200–1221; it reads EAPLEAPGNRTGPGPRSAVPRR. 2 disordered regions span residues 1358 to 1391 and 1406 to 1441; these read LNKV…KSTA and ESNH…APKP. Over residues 1378 to 1387 the composition is skewed to basic and acidic residues; that stretch reads KEWESLEKSP. N-linked (GlcNAc...) asparagine glycosylation is found at N1408 and N1611. 2 consecutive Plastocyanin-like domains span residues 1495–1659 and 1669–1822; these read RTRH…LLIC and GRQV…SKEC. An F5/8 type A 3 domain is found at 1495 to 1822; it reads RTRHYFIAAV…TTFLVYSKEC (328 aa). 3 cysteine pairs are disulfide-bonded: C1633–C1659, C1822–C1970, and C1975–C2127. 2 consecutive F5/8 type C domains span residues 1822–1970 and 1975–2127; these read CQAP…LMGC and CSMP…VLGC. N1919 carries N-linked (GlcNAc...) asparagine glycosylation.

Belongs to the multicopper oxidase family. As to quaternary structure, interacts with vWF. vWF binding is essential for the stabilization of F8 in circulation. In terms of processing, proteolytically cleaved by cathepsin CTSG to produce a partially activated form.

It localises to the secreted. The protein resides in the extracellular space. In terms of biological role, factor VIII, along with calcium and phospholipid, acts as a cofactor for factor IXa when it converts factor X to the activated form, factor Xa. This Sus scrofa (Pig) protein is Coagulation factor VIII (F8).